The chain runs to 183 residues: Nucleosome assembly protein 1-like 5 (183 aa).

The segment at 1–71 (MADSENQGPA…APKPKNDFIE (71 aa)) is disordered. 2 stretches are compositionally biased toward low complexity: residues 7 to 21 (QGPA…AAEA) and 28 to 49 (AEGG…SAAG). Residues 81–107 (VLALKKLQKRCDKIEAKFDKEFQALEK) are a coiled coil. Acidic residues predominate over residues 135–161 (EGEEEEEEEYEDDEEEGEEEEEEEEAA). The interval 135-183 (EGEEEEEEEYEDDEEEGEEEEEEEEAAAEAAAGAKHDDAHAEMPDDAKK) is disordered. Basic and acidic residues predominate over residues 168-183 (AKHDDAHAEMPDDAKK).

Belongs to the nucleosome assembly protein (NAP) family.

Its subcellular location is the nucleus. This chain is Nucleosome assembly protein 1-like 5 (NAP1L5), found in Pongo abelii (Sumatran orangutan).